We begin with the raw amino-acid sequence, 282 residues long: MKYVGAHVSISGGVENAPQNAQAIGAKAFALFTKNQRQWTAKPITDAQIELFKRRMDEYGFVPEQTLPHDSYLINLGNPDAAKRQQSLDAFVDEMQRCAQLGLPLLNFHPGSHLRQVDEDQCLDLIVDSLNRALERTSGVVAVIENTAGQGSNLGYRFEHLAHIIAGVEDKSRIGVCLDTCHTFVAGYDLRTAEAYAKTMDTFEQVVGFSYLRGMHLNDSKPDLGAKVDRHHSLGAGKLGLETFRLIMNDGRLDGIPLILETIDESLWAQEIALLYAMQESP.

The Zn(2+) site is built by histidine 69, histidine 109, glutamate 145, aspartate 179, histidine 182, histidine 216, aspartate 229, histidine 231, and glutamate 261.

It belongs to the AP endonuclease 2 family. Requires Zn(2+) as cofactor.

The enzyme catalyses Endonucleolytic cleavage to 5'-phosphooligonucleotide end-products.. Endonuclease IV plays a role in DNA repair. It cleaves phosphodiester bonds at apurinic or apyrimidinic (AP) sites, generating a 3'-hydroxyl group and a 5'-terminal sugar phosphate. The protein is Probable endonuclease 4 of Magnetococcus marinus (strain ATCC BAA-1437 / JCM 17883 / MC-1).